The primary structure comprises 98 residues: Small ribosomal subunit protein uS17 (98 aa).

The segment at 1-21 is disordered; the sequence is MADQKGPKYTPAAEKPRGRRK. K96 participates in a covalent cross-link: Isoglutamyl lysine isopeptide (Lys-Gln) (interchain with Q-Cter in protein Pup).

The protein belongs to the universal ribosomal protein uS17 family. As to quaternary structure, part of the 30S ribosomal subunit.

Functionally, one of the primary rRNA binding proteins, it binds specifically to the 5'-end of 16S ribosomal RNA. The sequence is that of Small ribosomal subunit protein uS17 (rpsQ) from Mycolicibacterium smegmatis (strain ATCC 700084 / mc(2)155) (Mycobacterium smegmatis).